The chain runs to 652 residues: Engulfment and cell motility protein 3 (652 aa).

One can recognise an ELMO domain in the interval 307–479; sequence EQREQLQALR…VVREQLARTL (173 aa).

In terms of assembly, probably interacts directly with the SH3-domain of DOCK1 via its SH3-binding site. Part of a complex with DOCK1 and RAC1. Interacts with ADGRB3.

It is found in the cytoplasm. Involved in cytoskeletal rearrangements required for phagocytosis of apoptotic cells and cell motility. Acts in association with DOCK1 and CRK. Was initially proposed to be required in complex with DOCK1 to activate Rac Rho small GTPases. May enhance the guanine nucleotide exchange factor (GEF) activity of DOCK1. The protein is Engulfment and cell motility protein 3 (ELMO3) of Bos taurus (Bovine).